Reading from the N-terminus, the 157-residue chain is Chromophore lyase CpcS/CpeS 1 (157 aa).

Belongs to the CpcS/CpeS biliprotein lyase family.

It is found in the plastid. The protein localises to the organellar chromatophore. Covalently attaches a chromophore to Cys residue(s) of phycobiliproteins. The chain is Chromophore lyase CpcS/CpeS 1 from Paulinella chromatophora.